The following is a 167-amino-acid chain: Glutathione peroxidase-like peroxiredoxin 1 (167 aa).

Cysteine 36 functions as the Cysteine sulfenic acid (-SOH) intermediate in the catalytic mechanism. Cysteine 36 and cysteine 82 are disulfide-bonded.

It belongs to the glutathione peroxidase family. In terms of assembly, monomer.

The protein resides in the peroxisome matrix. Its subcellular location is the mitochondrion outer membrane. It catalyses the reaction 2 glutathione + H2O2 = glutathione disulfide + 2 H2O. The catalysed reaction is a hydroperoxide + [thioredoxin]-dithiol = an alcohol + [thioredoxin]-disulfide + H2O. In terms of biological role, glutathione peroxidase-like protein that protects cells from phospholipid hydroperoxides and nonphospholipid peroxides during oxidative stress. Has peroxidase activity using thioredoxin or glutathione as a reducing power. Involved in peroxisome formation. The chain is Glutathione peroxidase-like peroxiredoxin 1 from Saccharomyces cerevisiae (strain ATCC 204508 / S288c) (Baker's yeast).